An 899-amino-acid polypeptide reads, in one-letter code: Plasma membrane ATPase (899 aa).

Positions 1 to 72 are disordered; it reads MSAATEPTKE…TDPSYGLTSD (72 aa). At 1-96 the chain is on the cytoplasmic side; the sequence is MSAATEPTKE…SEETENLFVK (96 aa). Residues 17–29 are compositionally biased toward acidic residues; the sequence is DSDDEDEDIDQLI. The chain crosses the membrane as a helical span at residues 97-117; that stretch reads FLMFFIGPIQFVMEAAAILAA. Over 118-121 the chain is Extracellular; that stretch reads GLED. The helical transmembrane segment at 122-141 threads the bilayer; sequence WVDFGVICGLLFLNAAVGFI. The Cytoplasmic segment spans residues 142-272; it reads QEYQAGSIVD…GSGHFTEVLN (131 aa). The chain crosses the membrane as a helical span at residues 273-294; it reads GIGTILLILVIVTLLLVWVASF. Topologically, residues 295–305 are extracellular; that stretch reads YRTNKIVRILR. Residues 306–328 form a helical membrane-spanning segment; the sequence is YTLAITIVGVPVGLPAVVTTTMA. Topologically, residues 329 to 700 are cytoplasmic; the sequence is VGAAYLAKKQ…IAILNRSLNI (372 aa). The active-site 4-aspartylphosphate intermediate is the D359. Residues D615 and D619 each contribute to the Mg(2+) site. Residues 701–719 traverse the membrane as a helical segment; it reads DLVVFIAIFADVATLAIAY. Residues 720 to 735 are Extracellular-facing; that stretch reads DNAPYSPKPVKWNLRR. A helical membrane pass occupies residues 736-755; it reads LWGMSVILGIILAIGTWITL. The Cytoplasmic segment spans residues 756–805; the sequence is TTMFVPKGGIIQNFGSIDGVLFLQISLTENWLIFITRAAGPFWSSIPSWQ. Residues 806–826 form a helical membrane-spanning segment; it reads LSGAVLIVDIIATMFCLFGWW. Residues 827–838 are Extracellular-facing; the sequence is SQNWNDIVTVVR. A helical membrane pass occupies residues 839 to 855; sequence VWIFSFGVFCVMGGAYY. Residues 856–899 are Cytoplasmic-facing; the sequence is MMSESEAFDRFMNGKSRRDKPSGRSVEDFLMAMQRVSTQHEKEN.

Belongs to the cation transport ATPase (P-type) (TC 3.A.3) family. Type IIIA subfamily.

The protein localises to the cell membrane. It carries out the reaction ATP + H2O + H(+)(in) = ADP + phosphate + 2 H(+)(out). Activated by high pH or also by potassium ions when the medium pH is low. In terms of biological role, the plasma membrane ATPase of plants and fungi is a hydrogen ion pump. The proton gradient it generates drives the active transport of nutrients by H(+)-symport. The resulting external acidification and/or internal alkinization may mediate growth responses. In Kluyveromyces lactis (strain ATCC 8585 / CBS 2359 / DSM 70799 / NBRC 1267 / NRRL Y-1140 / WM37) (Yeast), this protein is Plasma membrane ATPase (PMA1).